A 97-amino-acid polypeptide reads, in one-letter code: HssA/B-like protein 44 (97 aa).

Disordered stretches follow at residues 1 to 22 (MTLF…SSIA) and 62 to 97 (ASTS…CGCN). Over residues 72–84 (RPGRGHGGPHGHG) the composition is skewed to basic residues. A compositionally biased stretch (gly residues) spans 85-97 (RGGSGSGSSCGCN).

It belongs to the hssA/B family.

This Dictyostelium discoideum (Social amoeba) protein is HssA/B-like protein 44 (hssl44).